Consider the following 396-residue polypeptide: Probable sugar efflux transporter (396 aa).

The next 12 membrane-spanning stretches (helical) occupy residues 15–35 (VVTLAVAAFIFNTTEFVPVGL), 50–70 (VGIMLTIYAWVVALMSLPFML), 81–101 (LICLFVVFIASHVLSFLSWSF), 103–123 (VLVISRIGVAFAHAIFWSITA), 136–156 (AQALSLIATGTALAMVLGLPL), 170–190 (FFAIGIGALVTLLCLIKLLPL), 209–229 (PALMSIYLLTVVVVTAHYTAY), 246–266 (FATALLLLLGGAGIIGSVIFG), 275–295 (ALVSTAIALLLVCLALLLPAA), 299–319 (IHLGVLSIFWGIAMMIIGLGM), 333–353 (VAMALFSGIFNIGIGAGALVG), and 364–384 (MIGYVGAVPAFAALIWSIIIF).

The protein belongs to the major facilitator superfamily. SotB (TC 2.A.1.2) family.

It localises to the cell inner membrane. Functionally, involved in the efflux of sugars. The physiological role may be the reduction of the intracellular concentration of toxic sugars or sugar metabolites. This is Probable sugar efflux transporter from Shigella flexneri serotype 5b (strain 8401).